A 208-amino-acid chain; its full sequence is Ribonuclease HII (208 aa).

In terms of domain architecture, RNase H type-2 spans 18–208 (GFYAGVDEVG…RPVKERLEAC (191 aa)). A divalent metal cation contacts are provided by D24, E25, and D116.

This sequence belongs to the RNase HII family. Mn(2+) is required as a cofactor. Mg(2+) serves as cofactor.

The protein resides in the cytoplasm. It carries out the reaction Endonucleolytic cleavage to 5'-phosphomonoester.. Its function is as follows. Endonuclease that specifically degrades the RNA of RNA-DNA hybrids. This Shewanella loihica (strain ATCC BAA-1088 / PV-4) protein is Ribonuclease HII.